The following is a 488-amino-acid chain: 3-octaprenyl-4-hydroxybenzoate carboxy-lyase (488 aa).

Mn(2+) is bound at residue Asn-172. Prenylated FMN contacts are provided by residues 175–177 (IYR), 189–191 (RWL), and 194–195 (RG). Glu-238 contributes to the Mn(2+) binding site. Catalysis depends on Asp-287, which acts as the Proton donor.

Belongs to the UbiD family. As to quaternary structure, homohexamer. The cofactor is prenylated FMN. Requires Mn(2+) as cofactor.

It localises to the cell membrane. The catalysed reaction is a 4-hydroxy-3-(all-trans-polyprenyl)benzoate + H(+) = a 2-(all-trans-polyprenyl)phenol + CO2. The protein operates within cofactor biosynthesis; ubiquinone biosynthesis. Functionally, catalyzes the decarboxylation of 3-octaprenyl-4-hydroxy benzoate to 2-octaprenylphenol, an intermediate step in ubiquinone biosynthesis. The polypeptide is 3-octaprenyl-4-hydroxybenzoate carboxy-lyase (Pseudomonas fluorescens (strain Pf0-1)).